The following is a 193-amino-acid chain: Orotate phosphoribosyltransferase (193 aa).

E117–S125 contributes to the 5-phospho-alpha-D-ribose 1-diphosphate binding site. Orotate contacts are provided by T121 and R149.

It belongs to the purine/pyrimidine phosphoribosyltransferase family. PyrE subfamily. In terms of assembly, homodimer. Requires Mg(2+) as cofactor.

It catalyses the reaction orotidine 5'-phosphate + diphosphate = orotate + 5-phospho-alpha-D-ribose 1-diphosphate. Its pathway is pyrimidine metabolism; UMP biosynthesis via de novo pathway; UMP from orotate: step 1/2. Catalyzes the transfer of a ribosyl phosphate group from 5-phosphoribose 1-diphosphate to orotate, leading to the formation of orotidine monophosphate (OMP). This chain is Orotate phosphoribosyltransferase, found in Erythrobacter litoralis (strain HTCC2594).